Here is a 118-residue protein sequence, read N- to C-terminus: Large ribosomal subunit protein uL24c (118 aa).

Belongs to the universal ribosomal protein uL24 family. In terms of assembly, part of the 50S ribosomal subunit.

It is found in the plastid. It localises to the organellar chromatophore. One of two assembly initiator proteins, it binds directly to the 5'-end of the 23S rRNA, where it nucleates assembly of the 50S subunit. This chain is Large ribosomal subunit protein uL24c (rpl24), found in Paulinella chromatophora.